Consider the following 82-residue polypeptide: Small ribosomal subunit protein bS16 (82 aa).

Belongs to the bacterial ribosomal protein bS16 family.

The protein is Small ribosomal subunit protein bS16 of Salmonella agona (strain SL483).